Consider the following 643-residue polypeptide: COP9 signalosome complex subunit 10 (643 aa).

Acidic residues predominate over residues 1–33 (MTDESDNYNDFMMSDEDMDSIEMEDEENDVEGD). Residues 1 to 37 (MTDESDNYNDFMMSDEDMDSIEMEDEENDVEGDEGQR) are disordered. One can recognise a PCI domain in the interval 331 to 517 (CKEEFWECLK…DTVTFYSEQH (187 aa)). The segment covering 573–584 (DSQSHSKSNTKS) has biased composition (polar residues). A disordered region spans residues 573–594 (DSQSHSKSNTKSMSRHVSGHDP).

Component of a COP9 signalosome-like (CSN) complex.

The protein resides in the cytoplasm. It localises to the nucleus. In terms of biological role, component of the COP9 signalosome (CSN) complex that acts as an regulator of the ubiquitin (Ubl) conjugation pathway by mediating the deneddylation of the cullin subunit of SCF-type E3 ubiquitin-protein ligase complexes. The CSN complex is involved in the regulation of the mating pheromone response. This is COP9 signalosome complex subunit 10 (RRI2) from Candida glabrata (strain ATCC 2001 / BCRC 20586 / JCM 3761 / NBRC 0622 / NRRL Y-65 / CBS 138) (Yeast).